The chain runs to 467 residues: Putative alpha-amylase (467 aa).

The Nucleophile role is filled by E145.

The protein belongs to the glycosyl hydrolase 57 family.

It carries out the reaction Endohydrolysis of (1-&gt;4)-alpha-D-glucosidic linkages in polysaccharides containing three or more (1-&gt;4)-alpha-linked D-glucose units.. The chain is Putative alpha-amylase from Methanocaldococcus jannaschii (strain ATCC 43067 / DSM 2661 / JAL-1 / JCM 10045 / NBRC 100440) (Methanococcus jannaschii).